A 372-amino-acid chain; its full sequence is MKQLPVLEPGDKPRKATWYTLTVPGDSPCARVGHSCSYLPPVGNAKRGKVFIVGGANPNRSFSDVHTMDLGKHQWDLDTCKGLLPRYEHASFIPSCTPDRIWVFGGANQSGNRNCLQVLNPETRTWTTPEVTSPPPSPRTFHTSSAAIGNQLYVFGGGERGAQPVQDTKLHVFDANTLTWSQPETLGNPPSPRHGHVMVAAGTKLFIHGGLAGDRFYDDLHCIDISDMKWQKLNPTGAAPAGCAAHSAVAMGKHVYIFGGMTPAGALDTMYQYHTEEQHWTLLKFDTLLPPGRLDHSMCIIPWPVTCASEKEDSNSLTLNHEAEKEDSADKVMSHSGDSHEESQTATLLCLVFGGMNTEGEIYDDCIVTVVD.

5 Kelch repeats span residues 49–95, 100–146, 151–200, 204–250, and 254–303; these read KVFI…FIPS, RIWV…TSSA, QLYV…VMVA, KLFI…SAVA, and HVYI…IIPW. Residue Ser-133 is modified to Phosphoserine. Residues 314 to 340 are disordered; it reads SNSLTLNHEAEKEDSADKVMSHSGDSH. Positions 321–340 are enriched in basic and acidic residues; it reads HEAEKEDSADKVMSHSGDSH.

In terms of assembly, interacts with PIKFYVE; the interaction recruits RABEPK to the endosomal membrane. Interacts with RAB9 in its GTP-bound conformation. Post-translationally, phosphorylated on Ser residues by PIKFYVE.

It is found in the cytoplasm. It localises to the endosome membrane. Functionally, rab9 effector required for endosome to trans-Golgi network (TGN) transport. In Homo sapiens (Human), this protein is Rab9 effector protein with kelch motifs.